The sequence spans 199 residues: RNA-free ribonuclease P (199 aa).

Belongs to the HARP family.

The enzyme catalyses Endonucleolytic cleavage of RNA, removing 5'-extranucleotides from tRNA precursor.. Its function is as follows. RNA-free RNase P that catalyzes the removal of the 5'-leader sequence from pre-tRNA to produce the mature 5'-terminus. This chain is RNA-free ribonuclease P, found in Thermococcus onnurineus (strain NA1).